The primary structure comprises 855 residues: MASKLSFKRMDSIAETMPDALRQSRYQMKRCFQRYVSKGKRLLKNQQLMEELEKSLDDKVEKEKLVEGFLGYIICSTQEAVVLPPFVAFAVRMNPGIWEYVKVHSDDLSVEGITPSEYLKFKETLYDEKWAKDDNSLEVDFGALDLSTPHLTLPSSIGNGLQFVSKFMSSKLGGKPESMKPLLDYLLTLNYRGEKLMINDTIDTVSKLQTALLLAEVFVSGLPKYTPYLKFEQRFQEWGLERGWGDTAERCKETLNCLSEVLQAPDPTNMEKFFSRVPSIFNIVIFSIHGYFGQEKVLGLPDTGGQVVYILDQVRAMEEELLQRIKQQGLHVTPKILVLTRLIPDAKGTKCNVELEPVENTKYSHILRVPFKTEDGKDLRQWVSRFDIYPYLERYAQDSCAKILDILEGKPDLIIGNYTDGNLVASLLSNKLCVTQGTIAHALEKTKYEDSDVKWREMDQKYHFSCQFTADMISMNTSDFIITSTYQEIAGSKEKPGQYEHHYAFTMPGLCRYATGINVFDPKFNIAAPGADQSIYFPFTQKQKRLTDLHPQIDELLYSKDDTDEHIGYLADRNKPIIFSMARLDKVKNITGLVEWYGQNKKLRDLVNLVVVAGLLDASQSKDREEIEEINKMHNLMDRYQLKGQIRWIKAQTDRVRNGELYRCIADTKGAFVQPALYEAFGLTVIEAMNCGLPTFATNQGGPAEIIIDGVSGFHVNPINDREAGIKIADFFQKCKEDPSYWNKVSTAGLQRICECYTWKIYATRVLNMGSTYSFWKTLNKEERQAKQRYLQIFYNVQYRNLAKAMARAGDQQARQTTTGVAPSEIVVRPKERKPQTRMQRILTRLAGQKPPVSE.

The segment at 279–758 is GT-B glycosyltransferase; sequence SIFNIVIFSI…GLQRICECYT (480 aa).

This sequence belongs to the glycosyltransferase 1 family. Plant sucrose synthase subfamily. As to expression, predominantly expressed in roots, flowers and immature seeds.

The protein resides in the cytoplasm. The protein localises to the membrane. The catalysed reaction is an NDP-alpha-D-glucose + D-fructose = a ribonucleoside 5'-diphosphate + sucrose + H(+). Sucrose-cleaving enzyme that provides UDP-glucose and fructose for various metabolic pathways. This is Sucrose synthase 5 (SUS5) from Oryza sativa subsp. japonica (Rice).